Reading from the N-terminus, the 517-residue chain is ATP synthase subunit alpha 1 (517 aa).

174-181 (GDRQTGKT) lines the ATP pocket.

It belongs to the ATPase alpha/beta chains family. In terms of assembly, F-type ATPases have 2 components, CF(1) - the catalytic core - and CF(0) - the membrane proton channel. CF(1) has five subunits: alpha(3), beta(3), gamma(1), delta(1), epsilon(1). CF(0) has three main subunits: a(1), b(2) and c(9-12). The alpha and beta chains form an alternating ring which encloses part of the gamma chain. CF(1) is attached to CF(0) by a central stalk formed by the gamma and epsilon chains, while a peripheral stalk is formed by the delta and b chains.

It localises to the cell inner membrane. The enzyme catalyses ATP + H2O + 4 H(+)(in) = ADP + phosphate + 5 H(+)(out). Its function is as follows. Produces ATP from ADP in the presence of a proton gradient across the membrane. The alpha chain is a regulatory subunit. The polypeptide is ATP synthase subunit alpha 1 (Polaromonas naphthalenivorans (strain CJ2)).